A 335-amino-acid polypeptide reads, in one-letter code: Teichoic acids export ATP-binding protein TagH (335 aa).

An ABC transporter domain is found at 26–246 (IKGLFMPKSQ…YDEFVKWFNK (221 aa)). 60-67 (GINGSGKS) contacts ATP.

Belongs to the ABC transporter superfamily. Teichoic acids exporter (TC 3.A.1.104.1) family. As to quaternary structure, the complex is composed of two ATP-binding proteins (TagH) and two transmembrane proteins (TagG).

It localises to the cell membrane. The catalysed reaction is ATP + H2O + teichoic acidSide 1 = ADP + phosphate + teichoic acidSide 2.. Its function is as follows. Part of the ABC transporter complex TagGH involved in teichoic acids export. Responsible for energy coupling to the transport system. This Listeria monocytogenes serotype 4b (strain F2365) protein is Teichoic acids export ATP-binding protein TagH.